We begin with the raw amino-acid sequence, 300 residues long: N-acetylmuramic acid 6-phosphate etherase (300 aa).

The SIS domain occupies 57-220; it reads ITHAFAHGGR…TSGAMIRSGK (164 aa). Glutamate 85 functions as the Proton donor in the catalytic mechanism. The active site involves glutamate 116.

The protein belongs to the GCKR-like family. MurNAc-6-P etherase subfamily. Homodimer.

The enzyme catalyses N-acetyl-D-muramate 6-phosphate + H2O = N-acetyl-D-glucosamine 6-phosphate + (R)-lactate. Its pathway is amino-sugar metabolism; 1,6-anhydro-N-acetylmuramate degradation. It participates in amino-sugar metabolism; N-acetylmuramate degradation. The protein operates within cell wall biogenesis; peptidoglycan recycling. In terms of biological role, specifically catalyzes the cleavage of the D-lactyl ether substituent of MurNAc 6-phosphate, producing GlcNAc 6-phosphate and D-lactate. Together with AnmK, is also required for the utilization of anhydro-N-acetylmuramic acid (anhMurNAc) either imported from the medium or derived from its own cell wall murein, and thus plays a role in cell wall recycling. In Vibrio vulnificus (strain CMCP6), this protein is N-acetylmuramic acid 6-phosphate etherase.